The chain runs to 252 residues: Phosphate import ATP-binding protein PstB 1 (252 aa).

The ABC transporter domain maps to 6 to 247; it reads ISSKDLHLYY…PKEKQTEDYI (242 aa). ATP is bound at residue 38-45; it reads GPSGCGKS.

It belongs to the ABC transporter superfamily. Phosphate importer (TC 3.A.1.7) family. The complex is composed of two ATP-binding proteins (PstB), two transmembrane proteins (PstC and PstA) and a solute-binding protein (PstS).

The protein localises to the cell membrane. The enzyme catalyses phosphate(out) + ATP + H2O = ADP + 2 phosphate(in) + H(+). Functionally, part of the ABC transporter complex PstSACB involved in phosphate import. Responsible for energy coupling to the transport system. In Enterococcus faecalis (strain ATCC 700802 / V583), this protein is Phosphate import ATP-binding protein PstB 1.